The chain runs to 410 residues: Pectate lyase PEL9 (410 aa).

The signal sequence occupies residues 1-18 (MMGKSVWVFAALFPAVLA). Aspartate 191, aspartate 215, aspartate 216, and aspartate 219 together coordinate Ca(2+). Asparagine 234 is a glycosylation site (N-linked (GlcNAc...) asparagine). Catalysis depends on lysine 271, which acts as the Proton acceptor. Residues 342–351 (GEAPTSLSDE) show a composition bias toward polar residues. Disordered regions lie at residues 342–361 (GEAPTSLSDEQISDGNSWDG) and 381–410 (ERNADGTIEPSGFLLPADGEEIGATTDWSA).

Belongs to the polysaccharide lyase 9 family. It depends on Ca(2+) as a cofactor.

The protein localises to the secreted. The catalysed reaction is Eliminative cleavage of (1-&gt;4)-alpha-D-galacturonan to give oligosaccharides with 4-deoxy-alpha-D-galact-4-enuronosyl groups at their non-reducing ends.. Inhibited by iron ions. Activated in presence of the surfactant polysorbate 20, while inhibited in the presence of Triton X-100 and sodium dodecyl sulfate. Inhibited in presence of the organic solvents methanol, ethanol, propan-2-ol and acetone. In terms of biological role, presents an endo-cleaving activity on the homogalacturonan (HG) region in pectin. Active on homogalacturonan with a degree of polymerization above 4, and does not appear to be affected by the degree of methylation of the substrate. Does not degrade linear rhamnogalacturonan. The chain is Pectate lyase PEL9 from Emericella nidulans (strain FGSC A4 / ATCC 38163 / CBS 112.46 / NRRL 194 / M139) (Aspergillus nidulans).